The following is a 497-amino-acid chain: Anthranilate synthase component 1 (497 aa).

L-tryptophan is bound by residues Ser49 and Pro271–Leu273. Residue Gly312–Thr313 participates in chorismate binding. Glu339 serves as a coordination point for Mg(2+). Chorismate contacts are provided by residues Arg447, Gly461–Gly463, and Gly463. Mg(2+) is bound at residue Glu476.

It belongs to the anthranilate synthase component I family. Heterotetramer consisting of two non-identical subunits: a beta subunit (TrpG) and a large alpha subunit (TrpE). Mg(2+) is required as a cofactor.

The enzyme catalyses chorismate + L-glutamine = anthranilate + pyruvate + L-glutamate + H(+). It functions in the pathway amino-acid biosynthesis; L-tryptophan biosynthesis; L-tryptophan from chorismate: step 1/5. Feedback inhibited by tryptophan. Functionally, part of a heterotetrameric complex that catalyzes the two-step biosynthesis of anthranilate, an intermediate in the biosynthesis of L-tryptophan. In the first step, the glutamine-binding beta subunit (TrpG) of anthranilate synthase (AS) provides the glutamine amidotransferase activity which generates ammonia as a substrate that, along with chorismate, is used in the second step, catalyzed by the large alpha subunit of AS (TrpE) to produce anthranilate. In the absence of TrpG, TrpE can synthesize anthranilate directly from chorismate and high concentrations of ammonia. The protein is Anthranilate synthase component 1 (trpE) of Acinetobacter calcoaceticus.